The chain runs to 207 residues: Small ribosomal subunit protein uS4 (207 aa).

An S4 RNA-binding domain is found at 97–160 (SRLDNVVYRM…KKQARIVEAL (64 aa)).

It belongs to the universal ribosomal protein uS4 family. Part of the 30S ribosomal subunit. Contacts protein S5. The interaction surface between S4 and S5 is involved in control of translational fidelity.

One of the primary rRNA binding proteins, it binds directly to 16S rRNA where it nucleates assembly of the body of the 30S subunit. Functionally, with S5 and S12 plays an important role in translational accuracy. This Burkholderia mallei (strain NCTC 10247) protein is Small ribosomal subunit protein uS4.